Consider the following 57-residue polypeptide: UPF0391 membrane protein RPC_3278 (57 aa).

2 helical membrane passes run 4 to 24 (WVITFLVVALIAGILGFGGIA) and 30 to 50 (IAKIIFFIAVVLFLVSAVVGL).

It belongs to the UPF0391 family.

The protein localises to the cell membrane. The protein is UPF0391 membrane protein RPC_3278 of Rhodopseudomonas palustris (strain BisB18).